Reading from the N-terminus, the 83-residue chain is ATP synthase subunit c (83 aa).

The next 2 membrane-spanning stretches (helical) occupy residues 10–30 (IAVA…FGLL) and 52–72 (MFIV…IALF).

The protein belongs to the ATPase C chain family. As to quaternary structure, F-type ATPases have 2 components, F(1) - the catalytic core - and F(0) - the membrane proton channel. F(1) has five subunits: alpha(3), beta(3), gamma(1), delta(1), epsilon(1). F(0) has three main subunits: a(1), b(2) and c(10-14). The alpha and beta chains form an alternating ring which encloses part of the gamma chain. F(1) is attached to F(0) by a central stalk formed by the gamma and epsilon chains, while a peripheral stalk is formed by the delta and b chains.

It is found in the cell inner membrane. F(1)F(0) ATP synthase produces ATP from ADP in the presence of a proton or sodium gradient. F-type ATPases consist of two structural domains, F(1) containing the extramembraneous catalytic core and F(0) containing the membrane proton channel, linked together by a central stalk and a peripheral stalk. During catalysis, ATP synthesis in the catalytic domain of F(1) is coupled via a rotary mechanism of the central stalk subunits to proton translocation. In terms of biological role, key component of the F(0) channel; it plays a direct role in translocation across the membrane. A homomeric c-ring of between 10-14 subunits forms the central stalk rotor element with the F(1) delta and epsilon subunits. This chain is ATP synthase subunit c, found in Shewanella loihica (strain ATCC BAA-1088 / PV-4).